We begin with the raw amino-acid sequence, 502 residues long: ATP synthase subunit alpha (502 aa).

169-176 (GDRQTGKT) is a binding site for ATP.

It belongs to the ATPase alpha/beta chains family. In terms of assembly, F-type ATPases have 2 components, CF(1) - the catalytic core - and CF(0) - the membrane proton channel. CF(1) has five subunits: alpha(3), beta(3), gamma(1), delta(1), epsilon(1). CF(0) has three main subunits: a(1), b(2) and c(9-12). The alpha and beta chains form an alternating ring which encloses part of the gamma chain. CF(1) is attached to CF(0) by a central stalk formed by the gamma and epsilon chains, while a peripheral stalk is formed by the delta and b chains.

The protein localises to the cell membrane. The catalysed reaction is ATP + H2O + 4 H(+)(in) = ADP + phosphate + 5 H(+)(out). Functionally, produces ATP from ADP in the presence of a proton gradient across the membrane. The alpha chain is a regulatory subunit. In Exiguobacterium sp. (strain ATCC BAA-1283 / AT1b), this protein is ATP synthase subunit alpha.